A 198-amino-acid chain; its full sequence is Peptidyl-tRNA hydrolase (198 aa).

Tyr15 serves as a coordination point for tRNA. His20 functions as the Proton acceptor in the catalytic mechanism. Residues Phe65, Asn67, and Asn113 each contribute to the tRNA site.

The protein belongs to the PTH family. As to quaternary structure, monomer.

The protein localises to the cytoplasm. It carries out the reaction an N-acyl-L-alpha-aminoacyl-tRNA + H2O = an N-acyl-L-amino acid + a tRNA + H(+). Functionally, hydrolyzes ribosome-free peptidyl-tRNAs (with 1 or more amino acids incorporated), which drop off the ribosome during protein synthesis, or as a result of ribosome stalling. In terms of biological role, catalyzes the release of premature peptidyl moieties from peptidyl-tRNA molecules trapped in stalled 50S ribosomal subunits, and thus maintains levels of free tRNAs and 50S ribosomes. In Ehrlichia chaffeensis (strain ATCC CRL-10679 / Arkansas), this protein is Peptidyl-tRNA hydrolase.